The following is a 271-amino-acid chain: Zinc finger protein 501 (271 aa).

9 C2H2-type zinc fingers span residues 22-44, 50-72, 78-100, 106-128, 134-156, 162-184, 190-212, 218-240, and 246-268; these read SKCS…QRIH, YVCS…LRIH, YKCN…LRIH, YKCN…QRIH, YKCT…QRSH, FKCN…QRIH, YTCT…ERTH, YKCS…YRIH, and YECV…QRLH.

It belongs to the krueppel C2H2-type zinc-finger protein family.

It is found in the nucleus. Its subcellular location is the nucleolus. Its function is as follows. May be involved in transcriptional regulation. Essential for Golgi structural integrity. The sequence is that of Zinc finger protein 501 (ZNF501) from Homo sapiens (Human).